The chain runs to 146 residues: Large-conductance mechanosensitive channel (146 aa).

2 helical membrane passes run 12 to 32 (AFAMKGNVVDMAVGVIIGGAF) and 88 to 108 (LQATFDFLIIAFSIFLFIKLI).

This sequence belongs to the MscL family. As to quaternary structure, homopentamer.

It is found in the cell inner membrane. Its function is as follows. Channel that opens in response to stretch forces in the membrane lipid bilayer. May participate in the regulation of osmotic pressure changes within the cell. This is Large-conductance mechanosensitive channel from Bacteroides fragilis (strain ATCC 25285 / DSM 2151 / CCUG 4856 / JCM 11019 / LMG 10263 / NCTC 9343 / Onslow / VPI 2553 / EN-2).